Here is a 207-residue protein sequence, read N- to C-terminus: Glycerol-3-phosphate acyltransferase (207 aa).

Transmembrane regions (helical) follow at residues 7-27 (YALA…LVIV), 58-78 (LATF…FTLL), 83-103 (VGFV…WLGF), 116-136 (LAFV…LGLF), 141-161 (ISSL…WLMG), and 166-186 (LILA…RENI).

Belongs to the PlsY family. In terms of assembly, probably interacts with PlsX.

The protein resides in the cell inner membrane. It carries out the reaction an acyl phosphate + sn-glycerol 3-phosphate = a 1-acyl-sn-glycero-3-phosphate + phosphate. Its pathway is lipid metabolism; phospholipid metabolism. Catalyzes the transfer of an acyl group from acyl-phosphate (acyl-PO(4)) to glycerol-3-phosphate (G3P) to form lysophosphatidic acid (LPA). This enzyme utilizes acyl-phosphate as fatty acyl donor, but not acyl-CoA or acyl-ACP. This chain is Glycerol-3-phosphate acyltransferase, found in Hyphomonas neptunium (strain ATCC 15444).